The sequence spans 202 residues: 7-cyano-7-deazaguanine synthase 1 (202 aa).

Residue 7–17 participates in ATP binding; that stretch reads MSGGLDSSSAA. 4 residues coordinate Zn(2+): Cys-166, Cys-174, Cys-177, and Cys-180.

This sequence belongs to the QueC family. Requires Zn(2+) as cofactor.

The enzyme catalyses 7-carboxy-7-deazaguanine + NH4(+) + ATP = 7-cyano-7-deazaguanine + ADP + phosphate + H2O + H(+). Its pathway is purine metabolism; 7-cyano-7-deazaguanine biosynthesis. Its function is as follows. Catalyzes the ATP-dependent conversion of 7-carboxy-7-deazaguanine (CDG) to 7-cyano-7-deazaguanine (preQ(0)). The chain is 7-cyano-7-deazaguanine synthase 1 (queC1) from Sulfurisphaera tokodaii (strain DSM 16993 / JCM 10545 / NBRC 100140 / 7) (Sulfolobus tokodaii).